A 393-amino-acid chain; its full sequence is NAD(P)H-quinone oxidoreductase subunit H, chloroplastic (393 aa).

Belongs to the complex I 49 kDa subunit family. As to quaternary structure, NDH is composed of at least 16 different subunits, 5 of which are encoded in the nucleus.

Its subcellular location is the plastid. The protein localises to the chloroplast thylakoid membrane. It catalyses the reaction a plastoquinone + NADH + (n+1) H(+)(in) = a plastoquinol + NAD(+) + n H(+)(out). The catalysed reaction is a plastoquinone + NADPH + (n+1) H(+)(in) = a plastoquinol + NADP(+) + n H(+)(out). NDH shuttles electrons from NAD(P)H:plastoquinone, via FMN and iron-sulfur (Fe-S) centers, to quinones in the photosynthetic chain and possibly in a chloroplast respiratory chain. The immediate electron acceptor for the enzyme in this species is believed to be plastoquinone. Couples the redox reaction to proton translocation, and thus conserves the redox energy in a proton gradient. This is NAD(P)H-quinone oxidoreductase subunit H, chloroplastic from Hordeum vulgare (Barley).